The chain runs to 197 residues: Probable GTP-binding protein EngB (197 aa).

An EngB-type G domain is found at 25-197 (SAPEIAFAGR…VRDEFFKFTR (173 aa)). Residues 33–40 (GRSNVGKS), 60–64 (GCTRQ), 79–82 (DLPG), 146–149 (TKID), and 177–179 (MSI) contribute to the GTP site. Serine 40 and threonine 62 together coordinate Mg(2+).

It belongs to the TRAFAC class TrmE-Era-EngA-EngB-Septin-like GTPase superfamily. EngB GTPase family. Mg(2+) serves as cofactor.

Functionally, necessary for normal cell division and for the maintenance of normal septation. This is Probable GTP-binding protein EngB from Wolbachia sp. subsp. Drosophila simulans (strain wRi).